Consider the following 292-residue polypeptide: Zinc finger protein SNAI3 (292 aa).

The SNAG domain stretch occupies residues 1–20; it reads MPRSFLVKTHSSHRVPNYRR. 4 C2H2-type zinc fingers span residues 152–174, 183–205, 209–231, and 237–259; these read FECFHCHKPYHTLAGLARHRQLH, FTCKYCDKEYTSLGALKMHIRTH, CTCKICGKAFSRPWLLQGHVRTH, and YACSHCSRAFADRSNLRAHLQTH. The segment at 265–287 adopts a C2H2-type 5; degenerate zinc-finger fold; that stretch reads YRCRRCTKTFSRMSLLARHEESG.

Belongs to the snail C2H2-type zinc-finger protein family.

The protein resides in the nucleus. Seems to inhibit myoblast differentiation. Transcriptional repressor of E-box-dependent transactivation of downstream myogenic bHLHs genes. Binds preferentially to the canonical E-box sequences 5'-CAGGTG-3' and 5'-CACCTG-3'. The chain is Zinc finger protein SNAI3 (SNAI3) from Homo sapiens (Human).